Consider the following 110-residue polypeptide: PHD finger-like domain-containing protein 5A (110 aa).

Ala-2 bears the N-acetylalanine mark. N6-acetyllysine is present on Lys-3. Positions 11, 23, 26, 30, 33, 46, 49, 58, 61, 72, and 75 each coordinate Zn(2+). The segment at 35–51 is interaction with SF3B1 and SF3B3; that stretch reads SYVRPCTLVRICDECNY. An interaction with SF3B3 region spans residues 79–82; that stretch reads EKDR. Cys-85 contributes to the Zn(2+) binding site. A Phosphoserine modification is found at Ser-94.

It belongs to the PHF5 family. Component of the 17S U2 SnRNP complex, a ribonucleoprotein complex that contains small nuclear RNA (snRNA) U2 and a number of specific proteins. Part of the SF3B subcomplex of the 17S U2 SnRNP complex. SF3B associates with the splicing subcomplex SF3A and a 12S RNA unit to form the U2 small nuclear ribonucleoproteins complex (U2 snRNP). Within the SF3B complex interacts directly with SF3B1 and SF3B3. Component of the minor spliceosome, which splices U12-type introns. Within this complex, interacts with CRIPT. Interacts (via N-terminus) with U2AF1 and SRSF5; acts to bridge the two. Interacts (via C-terminus) with EP400 and DDX1; acts to bridge the two. Interacts with the PAF1 complex (PAF1C) composed of CDC73, PAF1, LEO1, CTR9, RTF1 and SKIC8. Within the PAF1C interacts directly with CDC73 and SKIC8. Interacts with RNA polymerase II. As to expression, expressed in primary spermatocytes (at protein level). Ubiquitously expressed in pre- and postnatal tissues. Highly expressed in pluripotent embryonic stem cells (ESCs) (at protein level) and induced pluripotent stem cells (iPSCs).

It localises to the nucleus. The protein resides in the nucleus speckle. Its function is as follows. Component of the 17S U2 SnRNP complex of the spliceosome, a large ribonucleoprotein complex that removes introns from transcribed pre-mRNAs. The 17S U2 SnRNP complex (1) directly participates in early spliceosome assembly and (2) mediates recognition of the intron branch site during pre-mRNA splicing by promoting the selection of the pre-mRNA branch-site adenosine, the nucleophile for the first step of splicing. Within the 17S U2 SnRNP complex, PHF5A is part of the SF3B subcomplex, which is required for 'A' complex assembly formed by the stable binding of U2 snRNP to the branchpoint sequence in pre-mRNA. Sequence independent binding of SF3A and SF3B subcomplexes upstream of the branch site is essential, it may anchor U2 snRNP to the pre-mRNA. Also acts as a component of the minor spliceosome, which is involved in the splicing of U12-type introns in pre-mRNAs. Also involved in elongation by RNA polymerase II as part of the PAF1 complex (PAF1C). PAF1C is required for maintenance of embryonic stem cell (ESC) self-renewal and cellular reprogramming of stem cells. Maintains pluripotency by recruiting and stabilizing PAF1C on pluripotency genes loci, and by regulating the expression of the pluripotency genes. Regulates the deposition of elongation-associated histone modifications, including dimethylated histone H3 'Lys-79' (H3K79me2) and trimethylated histone H3 'Lys-36' (H3K36me3), on PAF1C targets, self-renewal and pluripotency genes. Regulates RNA polymerase II promoter-proximal pause release of the PAF1C targets and self-renewal genes, and the levels of elongating ('Ser-2' phosphorylated) RNA polymerase II in their gene bodies. Regulates muscle specification in adult stem cells by stabilizing PAF1C in chromatin to promote myogenic differentiation. Acts as a transcriptional regulator by binding to the GJA1/Cx43 promoter and enhancing its up-regulation by ESR1/ER-alpha. In Mus musculus (Mouse), this protein is PHD finger-like domain-containing protein 5A (Phf5a).